Here is a 451-residue protein sequence, read N- to C-terminus: MNKMQMLKNEHVLVLGLAKSGYAAASILHEHGVNVTVNDQKPFEENEPAQLLSEKGIDVVCGSHPLRIFEDKDITILIKNPGIPYENVMVQEALRRQIPVWTEIELAYHLTSSPFIGITGSNGKTTTTTLIYEMLKKDSQKTLVAGNIGTVASEVAANADGDEWIVTELSSFQLMGTVEFRPKISLILNIFDAHLDYHHTREEYEKAKQKVFVHQHEDDIAVINLDDPSVVKLAEGSKAKKVFFSVKEPVEHGAFIQHGAIYYMNEHIIDVKDVVLPGEHNQENILAAICVVKNAGCSNDAIVHVLTTFGGVKHRLQFVDTIQSRKFYNDSKATNILATSKALSAFEQPTILLAGGLDRGNEFDELKPFMKHVKGMITFGETAPKFVKLGEELGIHHVKHVDNVEQAVPAAFNISEEEDVILLSPACASWDQHKTFEERGDMFVNAVHMLK.

120 to 126 (GSNGKTT) is an ATP binding site.

It belongs to the MurCDEF family.

Its subcellular location is the cytoplasm. The enzyme catalyses UDP-N-acetyl-alpha-D-muramoyl-L-alanine + D-glutamate + ATP = UDP-N-acetyl-alpha-D-muramoyl-L-alanyl-D-glutamate + ADP + phosphate + H(+). Its pathway is cell wall biogenesis; peptidoglycan biosynthesis. Cell wall formation. Catalyzes the addition of glutamate to the nucleotide precursor UDP-N-acetylmuramoyl-L-alanine (UMA). This Bacillus pumilus (strain SAFR-032) protein is UDP-N-acetylmuramoylalanine--D-glutamate ligase.